Here is a 546-residue protein sequence, read N- to C-terminus: MPGFQNANISDLAPPAREKTFDDTIAVKIPEDEKNTWFSWRKLWAFTGPGFLMSIAYLDPGNIESDLQAGAQAEYKLLWVLLVSHIVGMLLQRMSARLGVVSGKHMAEIAYDYYPLVPRIILWLMIEIAIVCSDMQEVIGTAIAIYLLSSGKIPLLVGVLITILDTFTFLFIDRYGIRKLEFIFVALISTMAISFGYEFVVMKPVLTKVLTGTVVPWCSGCGKEEIITAISIFGAVIMPHNFYLHSALVKSRKVDRSSKTRIAEANKYFSIESAFALSVSFFINLFVLSVFARGLYQKTNGDVNSMCLSHNDIPDSNVFPNNTSSVTVDLFQGGIYLGCQFGLFAMIIWAIGIFAAGQSSTMTGTYTGQFVMEGFVRISWPKWKRVLITRAVAITPTLILCIKAHGIKNLTGMNDFLNCVQMVQLPFALIPMITFTSSKRIMHNFRTSKPLQYFSIICGIITIGINVYFIFQYVTENFGTGWLIFVIIGPFTLLYIAFILYLAIYCLVACELMNDTVNLPGFDFHRTLELDAPWITETFVVNDVYF.

At 1 to 42 (MPGFQNANISDLAPPAREKTFDDTIAVKIPEDEKNTWFSWRK) the chain is on the cytoplasmic side. The helical transmembrane segment at 43-63 (LWAFTGPGFLMSIAYLDPGNI) threads the bilayer. Residues 64–70 (ESDLQAG) are Extracellular-facing. A helical transmembrane segment spans residues 71–91 (AQAEYKLLWVLLVSHIVGMLL). The Cytoplasmic portion of the chain corresponds to 92 to 119 (QRMSARLGVVSGKHMAEIAYDYYPLVPR). The helical transmembrane segment at 120-140 (IILWLMIEIAIVCSDMQEVIG) threads the bilayer. At 141 to 152 (TAIAIYLLSSGK) the chain is on the extracellular side. Residues 153-173 (IPLLVGVLITILDTFTFLFID) traverse the membrane as a helical segment. The Cytoplasmic portion of the chain corresponds to 174 to 181 (RYGIRKLE). Residues 182-202 (FIFVALISTMAISFGYEFVVM) form a helical membrane-spanning segment. Topologically, residues 203–228 (KPVLTKVLTGTVVPWCSGCGKEEIIT) are extracellular. Residues 229 to 249 (AISIFGAVIMPHNFYLHSALV) traverse the membrane as a helical segment. The Cytoplasmic segment spans residues 250 to 270 (KSRKVDRSSKTRIAEANKYFS). A helical transmembrane segment spans residues 271–291 (IESAFALSVSFFINLFVLSVF). Over 292-334 (ARGLYQKTNGDVNSMCLSHNDIPDSNVFPNNTSSVTVDLFQGG) the chain is Extracellular. Residue N321 is glycosylated (N-linked (GlcNAc...) asparagine). Residues 335 to 355 (IYLGCQFGLFAMIIWAIGIFA) form a helical membrane-spanning segment. The Cytoplasmic portion of the chain corresponds to 356–386 (AGQSSTMTGTYTGQFVMEGFVRISWPKWKRV). A helical membrane pass occupies residues 387–407 (LITRAVAITPTLILCIKAHGI). At 408 to 415 (KNLTGMND) the chain is on the extracellular side. N409 carries an N-linked (GlcNAc...) asparagine glycan. A helical transmembrane segment spans residues 416 to 436 (FLNCVQMVQLPFALIPMITFT). The Cytoplasmic portion of the chain corresponds to 437-453 (SSKRIMHNFRTSKPLQY). The helical transmembrane segment at 454–474 (FSIICGIITIGINVYFIFQYV) threads the bilayer. Topologically, residues 475-483 (TENFGTGWL) are extracellular. Residues 484-504 (IFVIIGPFTLLYIAFILYLAI) form a helical membrane-spanning segment. The Cytoplasmic portion of the chain corresponds to 505 to 546 (YCLVACELMNDTVNLPGFDFHRTLELDAPWITETFVVNDVYF).

This sequence belongs to the NRAMP family. As to expression, expressed in dopaminergic neurons (at protein level). Primarily expressed in mc1, mc2 and mc3 epithelial cells of the pharynx and vpil-6 pharyngeal-intestinal valve cells displaying an anterior-posterior expression gradient. Expressed in gonad sheath cells.

The protein resides in the apical cell membrane. Its subcellular location is the cytoplasmic vesicle membrane. Its function is as follows. Probable divalent metal ion transporter which regulates Mn(2+) uptake. In Caenorhabditis elegans, this protein is NRAMP-like transporter smf-2.